A 206-amino-acid chain; its full sequence is LexA repressor (206 aa).

The segment at residues 28 to 48 (RAEIATRLGFKSANAAEEHLK) is a DNA-binding region (H-T-H motif). Active-site for autocatalytic cleavage activity residues include serine 123 and lysine 160.

It belongs to the peptidase S24 family. Homodimer.

The catalysed reaction is Hydrolysis of Ala-|-Gly bond in repressor LexA.. Functionally, represses a number of genes involved in the response to DNA damage (SOS response), including recA and lexA. In the presence of single-stranded DNA, RecA interacts with LexA causing an autocatalytic cleavage which disrupts the DNA-binding part of LexA, leading to derepression of the SOS regulon and eventually DNA repair. This Shewanella oneidensis (strain ATCC 700550 / JCM 31522 / CIP 106686 / LMG 19005 / NCIMB 14063 / MR-1) protein is LexA repressor.